The sequence spans 412 residues: Shaggy-related protein kinase zeta (412 aa).

A compositionally biased stretch (pro residues) spans 1 to 19; sequence MTSIPLGPPQPPSLAPQPP. The tract at residues 1–33 is disordered; the sequence is MTSIPLGPPQPPSLAPQPPHLHGGDSLKRRPDI. The segment covering 22–33 has biased composition (basic and acidic residues); the sequence is HGGDSLKRRPDI. The residue at position 26 (Ser-26) is a Phosphoserine. Residues 72-356 form the Protein kinase domain; it reads YMAERVVGTG…ALEACAHPFF (285 aa). ATP is bound by residues 78 to 86 and Lys-101; that span reads VGTGSFGIV. The residue at position 127 (Ser-127) is a Phosphoserine. Phosphothreonine is present on residues Thr-136 and Thr-137. Asp-197 serves as the catalytic Proton acceptor. Position 219 is a phosphoserine (Ser-219). Tyr-232 carries the phosphotyrosine modification. Ser-252 is subject to Phosphoserine. Position 293 is a phosphothreonine (Thr-293). Ser-342 is modified (phosphoserine). At Thr-346 the chain carries Phosphothreonine.

Belongs to the protein kinase superfamily. CMGC Ser/Thr protein kinase family. GSK-3 subfamily. As to quaternary structure, binds to KIB1. Interacts with beet curly top virus AL4/C4 and tomato golden mosaic virus AL4/AC4. Autophosphorylated mainly on threonine and serine residues.

It carries out the reaction L-seryl-[protein] + ATP = O-phospho-L-seryl-[protein] + ADP + H(+). The enzyme catalyses L-threonyl-[protein] + ATP = O-phospho-L-threonyl-[protein] + ADP + H(+). In terms of biological role, may mediate extracellular signals to regulate transcription in differentiating cells. In Arabidopsis thaliana (Mouse-ear cress), this protein is Shaggy-related protein kinase zeta (ASK6).